The chain runs to 427 residues: Hydroxylamine reductase (427 aa).

The [4Fe-4S] cluster site is built by C3, C6, C15, and C21. Hybrid [4Fe-2O-2S] cluster-binding residues include H129, E153, C197, C283, C311, C336, E370, and K372. C283 carries the cysteine persulfide modification.

Belongs to the HCP family. The cofactor is [4Fe-4S] cluster. It depends on hybrid [4Fe-2O-2S] cluster as a cofactor.

The protein resides in the cytoplasm. The catalysed reaction is A + NH4(+) + H2O = hydroxylamine + AH2 + H(+). Its function is as follows. Catalyzes the reduction of hydroxylamine to form NH(3) and H(2)O. In Moorella thermoacetica (strain ATCC 39073 / JCM 9320), this protein is Hydroxylamine reductase.